Consider the following 288-residue polypeptide: 33 kDa chaperonin (288 aa).

2 cysteine pairs are disulfide-bonded: Cys-236–Cys-238 and Cys-269–Cys-272.

Belongs to the HSP33 family. Under oxidizing conditions two disulfide bonds are formed involving the reactive cysteines. Under reducing conditions zinc is bound to the reactive cysteines and the protein is inactive.

It is found in the cytoplasm. Redox regulated molecular chaperone. Protects both thermally unfolding and oxidatively damaged proteins from irreversible aggregation. Plays an important role in the bacterial defense system toward oxidative stress. This chain is 33 kDa chaperonin, found in Lactococcus lactis subsp. cremoris (strain MG1363).